A 321-amino-acid chain; its full sequence is Probable pectate lyase A (321 aa).

Residues methionine 1–alanine 20 form the signal peptide. N-linked (GlcNAc...) asparagine glycosylation is present at asparagine 93. Ca(2+)-binding residues include aspartate 134, aspartate 163, and aspartate 167. The active site involves arginine 220.

It belongs to the polysaccharide lyase 1 family. Ca(2+) serves as cofactor.

Its subcellular location is the secreted. It catalyses the reaction Eliminative cleavage of (1-&gt;4)-alpha-D-galacturonan to give oligosaccharides with 4-deoxy-alpha-D-galact-4-enuronosyl groups at their non-reducing ends.. Its function is as follows. Pectinolytic enzyme consist of four classes of enzymes: pectin lyase, polygalacturonase, pectin methylesterase and rhamnogalacturonase. Among pectinolytic enzymes, pectin lyase is the most important in depolymerization of pectin, since it cleaves internal glycosidic bonds of highly methylated pectins. Favors pectate, the anion, over pectin, the methyl ester. This Aspergillus flavus (strain ATCC 200026 / FGSC A1120 / IAM 13836 / NRRL 3357 / JCM 12722 / SRRC 167) protein is Probable pectate lyase A (plyA).